Here is a 724-residue protein sequence, read N- to C-terminus: Methionine--tRNA ligase (724 aa).

Positions 12-22 match the 'HIGH' region motif; that stretch reads PYVNNIPHLGN. Cys143, Cys146, Cys155, and Cys158 together coordinate Zn(2+). Residues 330 to 334 carry the 'KMSKS' region motif; sequence KFSKS. Lys333 serves as a coordination point for ATP. The 106-residue stretch at 560–665 folds into the tRNA-binding domain; sequence FREKVLLRVV…KNPIAGERII (106 aa).

This sequence belongs to the class-I aminoacyl-tRNA synthetase family. MetG type 1 subfamily. Homodimer. Requires Zn(2+) as cofactor.

It is found in the cytoplasm. It carries out the reaction tRNA(Met) + L-methionine + ATP = L-methionyl-tRNA(Met) + AMP + diphosphate. Is required not only for elongation of protein synthesis but also for the initiation of all mRNA translation through initiator tRNA(fMet) aminoacylation. This Borreliella afzelii (strain PKo) (Borrelia afzelii) protein is Methionine--tRNA ligase.